The chain runs to 146 residues: Phospholipase A2 PS22 (146 aa).

A signal peptide spans 1–19 (MYPAHLLVLLAVCVSLLGA). A propeptide spanning residues 20–27 (ASVPPQPL) is cleaved from the precursor. 7 disulfides stabilise this stretch: C38–C98, C54–C145, C56–C72, C71–C126, C78–C119, C87–C112, and C105–C117. Ca(2+) contacts are provided by Y55, G57, and G59. H75 is an active-site residue. D76 contributes to the Ca(2+) binding site. The active site involves D120.

It belongs to the phospholipase A2 family. Group I subfamily. D49 sub-subfamily. Requires Ca(2+) as cofactor. As to expression, expressed by the venom gland.

It is found in the secreted. It carries out the reaction a 1,2-diacyl-sn-glycero-3-phosphocholine + H2O = a 1-acyl-sn-glycero-3-phosphocholine + a fatty acid + H(+). Functionally, snake venom phospholipase A2 (PLA2) that inhibits collagen-induced platelet aggregation. PLA2 catalyzes the calcium-dependent hydrolysis of the 2-acyl groups in 3-sn-phosphoglycerides. The polypeptide is Phospholipase A2 PS22 (Drysdalia coronoides (White-lipped snake)).